The following is a 151-amino-acid chain: MSIPFSNTHYRIPQGFGNLLEGLTREILREQPDNIPAFAAAYFESLLEKREKTNFDPAEWGSKVEDRFYNNHAFEEQEPPEKSDPKQEESQISGKEEETSVTILDSSEEDKEKEEVAAVKIQAAFRGHIAREEAKKMKTNSLQNEEKEENK.

2 disordered regions span residues 56–115 (DPAE…EKEE) and 127–151 (GHIA…EENK). Residues 62–98 (SKVEDRFYNNHAFEEQEPPEKSDPKQEESQISGKEEE) show a composition bias toward basic and acidic residues. The IQ domain occupies 114 to 143 (EEVAAVKIQAAFRGHIAREEAKKMKTNSLQ).

In terms of assembly, homodimer. May interact with ROPN1. Testis and sperm specific.

Its subcellular location is the membrane. In terms of biological role, sperm surface zona pellucida binding protein. Helps to bind spermatozoa to the zona pellucida with high affinity. Might function in binding zona pellucida and carbohydrates. In Homo sapiens (Human), this protein is Sperm surface protein Sp17 (SPA17).